Consider the following 187-residue polypeptide: GTP cyclohydrolase 1 (187 aa).

Zn(2+) contacts are provided by Cys78, His81, and Cys150.

It belongs to the GTP cyclohydrolase I family. Homomer.

It catalyses the reaction GTP + H2O = 7,8-dihydroneopterin 3'-triphosphate + formate + H(+). Its pathway is cofactor biosynthesis; 7,8-dihydroneopterin triphosphate biosynthesis; 7,8-dihydroneopterin triphosphate from GTP: step 1/1. This Brevibacillus brevis (strain 47 / JCM 6285 / NBRC 100599) protein is GTP cyclohydrolase 1.